Consider the following 179-residue polypeptide: Natural killer cells antigen CD94 (179 aa).

Residues methionine 1–arginine 10 lie on the Cytoplasmic side of the membrane. The chain crosses the membrane as a helical; Signal-anchor for type II membrane protein span at residues leucine 11 to leucine 31. At lysine 32–isoleucine 179 the chain is on the extracellular side. Intrachain disulfides connect cysteine 58/cysteine 70 and cysteine 61/cysteine 72. Residues tyrosine 68–lysine 175 enclose the C-type lectin domain. 2 N-linked (GlcNAc...) asparagine glycosylation sites follow: asparagine 83 and asparagine 132. Disulfide bonds link cysteine 89/cysteine 174 and cysteine 152/cysteine 166.

As to quaternary structure, can form disulfide-bonded heterodimer with NKG2 family members KLRC1 and KLRC2. KLRD1-KLRC1 heterodimer interacts with peptide-bound MHC-E-B2M heterotrimeric complex. KLRD1 plays a prominent role in directly interacting with MHC-E. KLRD1-KLRC1 interacts with much higher affinity with peptide-bound MHC-E-B2M than KLRD1-KLRC2. Interacts with the adapter protein TYROBP/DAP12; this interaction is required for cell surface expression and cell activation. In terms of tissue distribution, natural killer cells.

It is found in the cell membrane. In terms of biological role, immune receptor involved in self-nonself discrimination. In complex with KLRC1 or KLRC2 on cytotoxic and regulatory lymphocyte subsets, recognizes non-classical major histocompatibility (MHC) class Ib molecule MHC-E loaded with self-peptides derived from the signal sequence of classical MHC class Ia and non-classical MHC class Ib molecules. Enables cytotoxic cells to monitor the expression of MHC class I molecules in healthy cells and to tolerate self. Primarily functions as a ligand binding subunit as it lacks the capacity to signal. Its function is as follows. KLRD1-KLRC1 acts as an immune inhibitory receptor. Key inhibitory receptor on natural killer (NK) cells that regulates their activation and effector functions. Dominantly counteracts T cell receptor signaling on a subset of memory/effector CD8-positive T cells as part of an antigen-driven response to avoid autoimmunity. On intraepithelial CD8-positive gamma-delta regulatory T cells triggers TGFB1 secretion, which in turn limits the cytotoxic programming of intraepithelial CD8-positive alpha-beta T cells, distinguishing harmless from pathogenic antigens. In MHC-E-rich tumor microenvironment, acts as an immune inhibitory checkpoint and may contribute to progressive loss of effector functions of NK cells and tumor-specific T cells, a state known as cell exhaustion. Upon MHC-E-peptide binding, transmits intracellular signals through KLRC1 immunoreceptor tyrosine-based inhibition motifs (ITIMs) by recruiting INPP5D/SHIP-1 and INPPL1/SHIP-2 tyrosine phosphatases to ITIMs, and ultimately opposing signals transmitted by activating receptors through dephosphorylation of proximal signaling molecules. KLRD1-KLRC2 acts as an immune activating receptor. On cytotoxic lymphocyte subsets recognizes MHC-E loaded with signal sequence-derived peptides from non-classical MHC class Ib MHC-G molecules, likely playing a role in the generation and effector functions of adaptive NK cells and in maternal-fetal tolerance during pregnancy. Regulates the effector functions of terminally differentiated cytotoxic lymphocyte subsets, and in particular may play a role in adaptive NK cell response to viral infection. Upon MHC-E-peptide binding, transmits intracellular signals via the adapter protein TYROBP/DAP12, triggering the phosphorylation of proximal signaling molecules and cell activation. In Macaca mulatta (Rhesus macaque), this protein is Natural killer cells antigen CD94 (KLRD1).